The following is a 287-amino-acid chain: ATP synthase gamma chain (287 aa).

This sequence belongs to the ATPase gamma chain family. In terms of assembly, F-type ATPases have 2 components, CF(1) - the catalytic core - and CF(0) - the membrane proton channel. CF(1) has five subunits: alpha(3), beta(3), gamma(1), delta(1), epsilon(1). CF(0) has three main subunits: a, b and c.

It localises to the cell inner membrane. Produces ATP from ADP in the presence of a proton gradient across the membrane. The gamma chain is believed to be important in regulating ATPase activity and the flow of protons through the CF(0) complex. The polypeptide is ATP synthase gamma chain (Salmonella agona (strain SL483)).